Here is a 249-residue protein sequence, read N- to C-terminus: Phosphoribosylaminoimidazole-succinocarboxamide synthase (249 aa).

The protein belongs to the SAICAR synthetase family.

It carries out the reaction 5-amino-1-(5-phospho-D-ribosyl)imidazole-4-carboxylate + L-aspartate + ATP = (2S)-2-[5-amino-1-(5-phospho-beta-D-ribosyl)imidazole-4-carboxamido]succinate + ADP + phosphate + 2 H(+). It participates in purine metabolism; IMP biosynthesis via de novo pathway; 5-amino-1-(5-phospho-D-ribosyl)imidazole-4-carboxamide from 5-amino-1-(5-phospho-D-ribosyl)imidazole-4-carboxylate: step 1/2. The polypeptide is Phosphoribosylaminoimidazole-succinocarboxamide synthase (Chloroflexus aurantiacus (strain ATCC 29366 / DSM 635 / J-10-fl)).